Consider the following 107-residue polypeptide: Thiosulfate sulfurtransferase GlpE (107 aa).

The 85-residue stretch at 17-101 folds into the Rhodanese domain; sequence AAGAARLVDI…GFEAWRREFP (85 aa). Cysteine 65 functions as the Cysteine persulfide intermediate in the catalytic mechanism.

Belongs to the GlpE family.

The protein resides in the cytoplasm. The enzyme catalyses thiosulfate + hydrogen cyanide = thiocyanate + sulfite + 2 H(+). The catalysed reaction is thiosulfate + [thioredoxin]-dithiol = [thioredoxin]-disulfide + hydrogen sulfide + sulfite + 2 H(+). Its function is as follows. Transferase that catalyzes the transfer of sulfur from thiosulfate to thiophilic acceptors such as cyanide or dithiols. May function in a CysM-independent thiosulfate assimilation pathway by catalyzing the conversion of thiosulfate to sulfite, which can then be used for L-cysteine biosynthesis. This chain is Thiosulfate sulfurtransferase GlpE, found in Aeromonas hydrophila subsp. hydrophila (strain ATCC 7966 / DSM 30187 / BCRC 13018 / CCUG 14551 / JCM 1027 / KCTC 2358 / NCIMB 9240 / NCTC 8049).